Here is a 626-residue protein sequence, read N- to C-terminus: Probable potassium transport system protein Kup (626 aa).

A run of 12 helical transmembrane segments spans residues 11 to 31 (FLTL…TSPL), 55 to 75 (LSLI…VFVM), 103 to 123 (AWII…GMIT), 140 to 160 (AALS…LFLI), 171 to 191 (LFGP…FVSL), 216 to 236 (LGFA…ALYA), 250 to 270 (WFAV…ALLI), 282 to 302 (LLVP…ATVI), 340 to 360 (IYAP…VLAF), 369 to 389 (AYGL…LVVA), 395 to 415 (WPGL…LSFL), and 422 to 442 (LGDG…VMST).

The protein belongs to the HAK/KUP transporter (TC 2.A.72) family.

Its subcellular location is the cell inner membrane. It carries out the reaction K(+)(in) + H(+)(in) = K(+)(out) + H(+)(out). Functionally, transport of potassium into the cell. Likely operates as a K(+):H(+) symporter. This chain is Probable potassium transport system protein Kup, found in Methylococcus capsulatus (strain ATCC 33009 / NCIMB 11132 / Bath).